Here is a 216-residue protein sequence, read N- to C-terminus: Ras-related protein RABA1b (216 aa).

20–27 (GDSGVGKS) provides a ligand contact to GTP. Residues 42–50 (SKSTIGVEF) carry the Effector region motif. Residues 68–72 (DTAGQ), 126–129 (NKSD), and 156–157 (SA) contribute to the GTP site. 2 S-geranylgeranyl cysteine lipidation sites follow: Cys-213 and Cys-214.

The protein belongs to the small GTPase superfamily. Rab family.

It is found in the cell membrane. In terms of biological role, intracellular vesicle trafficking and protein transport. This Arabidopsis thaliana (Mouse-ear cress) protein is Ras-related protein RABA1b (RABA1B).